Reading from the N-terminus, the 170-residue chain is Probable T4-type lysozyme 2 (170 aa).

E13 acts as the Proton donor in catalysis. The active-site Nucleophile is D22.

It belongs to the glycosyl hydrolase 24 family.

It catalyses the reaction Hydrolysis of (1-&gt;4)-beta-linkages between N-acetylmuramic acid and N-acetyl-D-glucosamine residues in a peptidoglycan and between N-acetyl-D-glucosamine residues in chitodextrins.. This is Probable T4-type lysozyme 2 from Dictyostelium discoideum (Social amoeba).